The primary structure comprises 362 residues: Alternative oxidase, mitochondrial (362 aa).

The transit peptide at 1-64 (MNTPKVNILY…RGFTTTSVVR (64 aa)) directs the protein to the mitochondrion. The helical transmembrane segment at 156–176 (LVRFIFLESIAGVPGMVAGML) threads the bilayer. Glu163, Glu202, and His205 together coordinate Fe cation. The helical transmembrane segment at 222 to 242 (LILGAQGVFFNAMFLSYLVSP) threads the bilayer. 3 residues coordinate Fe cation: Glu253, Glu310, and His313.

The protein belongs to the alternative oxidase family. Fe cation serves as cofactor.

The protein localises to the mitochondrion inner membrane. Functionally, catalyzes cyanide-resistant oxygen consumption. May increase respiration when the cytochrome respiratory pathway is restricted, or in response to low temperatures. The chain is Alternative oxidase, mitochondrial (aod-1) from Gelasinospora sp. (strain S23).